A 319-amino-acid chain; its full sequence is Phospho-N-acetylmuramoyl-pentapeptide-transferase (319 aa).

A run of 10 helical transmembrane segments spans residues 1-21, 53-73, 77-97, 117-137, 140-160, 172-192, 195-215, 221-241, 249-269, and 298-318; these read MSIL…FLLM, TMGG…VGAW, LNGT…IGMW, FLAQ…EGFQ, FGLT…MVGF, GLVT…ALVQ, TEVA…FPFN, IFMG…VALV, LIIG…VAYF, and GVFW…ILFL.

Belongs to the glycosyltransferase 4 family. MraY subfamily. Mg(2+) is required as a cofactor.

The protein resides in the cell membrane. It carries out the reaction UDP-N-acetyl-alpha-D-muramoyl-L-alanyl-gamma-D-glutamyl-L-lysyl-D-alanyl-D-alanine + di-trans,octa-cis-undecaprenyl phosphate = Mur2Ac(oyl-L-Ala-gamma-D-Glu-L-Lys-D-Ala-D-Ala)-di-trans,octa-cis-undecaprenyl diphosphate + UMP. The protein operates within cell wall biogenesis; peptidoglycan biosynthesis. Functionally, catalyzes the initial step of the lipid cycle reactions in the biosynthesis of the cell wall peptidoglycan: transfers peptidoglycan precursor phospho-MurNAc-pentapeptide from UDP-MurNAc-pentapeptide onto the lipid carrier undecaprenyl phosphate, yielding undecaprenyl-pyrophosphoryl-MurNAc-pentapeptide, known as lipid I. In Limosilactobacillus fermentum (strain NBRC 3956 / LMG 18251) (Lactobacillus fermentum), this protein is Phospho-N-acetylmuramoyl-pentapeptide-transferase.